Consider the following 154-residue polypeptide: uncharacterized protein (154 aa).

One can recognise an HTH marR-type domain in the interval 14 to 146; the sequence is AMNLYRVFAR…LIVLLKKAGI (133 aa). The segment at residues 60 to 83 is a DNA-binding region (H-T-H motif); it reads LQQIGSRLLLVSGNVTYVIDKLER.

This is an uncharacterized protein from Bacillus subtilis (strain 168).